A 141-amino-acid chain; its full sequence is Endoribonuclease YbeY (141 aa).

Residues histidine 107, histidine 111, and histidine 117 each contribute to the Zn(2+) site.

Belongs to the endoribonuclease YbeY family. It depends on Zn(2+) as a cofactor.

The protein localises to the cytoplasm. In terms of biological role, single strand-specific metallo-endoribonuclease involved in late-stage 70S ribosome quality control and in maturation of the 3' terminus of the 16S rRNA. The chain is Endoribonuclease YbeY from Leptospira interrogans serogroup Icterohaemorrhagiae serovar Lai (strain 56601).